Reading from the N-terminus, the 1161-residue chain is Nardilysin (1161 aa).

Residues 1–18 (MLRRVAVAAVCVTGRKLR) form the signal peptide. 2 disordered regions span residues 49–103 (MPGR…IIKS) and 130–218 (VEGK…KKTT). Serine 85, serine 91, and serine 93 each carry phosphoserine. Positions 138 to 209 (TDEEEEEEEE…EENELEELEE (72 aa)) are enriched in acidic residues. Histidine 244 contributes to the Zn(2+) binding site. Catalysis depends on glutamate 247, which acts as the Proton acceptor. Zn(2+) contacts are provided by histidine 248 and glutamate 325.

It belongs to the peptidase M16 family. Interacts with BACE1 and NRG1. The cofactor is Zn(2+). In terms of tissue distribution, highly expressed in brain of early postnatal mice but expressed at a lower level in the brains of adult mice. Expression is high in cortical neurons, and lower in neurons in the striatum. Very low expression detected in the corpus callosum. Also expressed in the gray matter in spinal cord and dorsal root ganglia.

The protein resides in the mitochondrion. It localises to the cell projection. Its subcellular location is the dendrite. The enzyme catalyses Hydrolysis of polypeptides, preferably at -Xaa-|-Arg-Lys-, and less commonly at -Arg-|-Arg-Xaa-, in which Xaa is not Arg or Lys.. Its function is as follows. Cleaves peptide substrates on the N-terminus of arginine residues in dibasic pairs. Is a critical activator of BACE1- and ADAM17-mediated pro-neuregulin ectodomain shedding, involved in the positive regulation of axonal maturation and myelination. Required for proper functioning of 2-oxoglutarate dehydrogenase (OGDH). This chain is Nardilysin, found in Mus musculus (Mouse).